A 320-amino-acid chain; its full sequence is Cytosolic Fe-S cluster assembly factor NUBP1 (320 aa).

Met1 bears the N-acetylmethionine mark. [4Fe-4S] cluster-binding residues include Cys8, Cys22, Cys25, and Cys31. 62 to 69 is a binding site for ATP; that stretch reads GKGGVGKS. [4Fe-4S] cluster is bound by residues Cys235 and Cys238. Residue Ser319 is modified to Phosphoserine.

This sequence belongs to the Mrp/NBP35 ATP-binding proteins family. NUBP1/NBP35 subfamily. Heterotetramer of 2 NUBP1 and 2 NUBP2 chains. Interacts with KIFC1. Interacts with NUBP2. Interacts with the BBS/CCT complex subunit CCT1. The cofactor is [4Fe-4S] cluster.

It is found in the cytoplasm. The protein localises to the nucleus. It localises to the cell projection. Its subcellular location is the cytoskeleton. The protein resides in the cilium axoneme. It is found in the cilium basal body. The protein localises to the microtubule organizing center. It localises to the centrosome. Its subcellular location is the centriole. Functionally, component of the cytosolic iron-sulfur (Fe/S) protein assembly (CIA) machinery. Required for maturation of extramitochondrial Fe-S proteins. The NUBP1-NUBP2 heterotetramer forms a Fe-S scaffold complex, mediating the de novo assembly of an Fe-S cluster and its transfer to target apoproteins. Implicated in the regulation of centrosome duplication. Negatively regulates cilium formation and structure. The protein is Cytosolic Fe-S cluster assembly factor NUBP1 of Homo sapiens (Human).